A 286-amino-acid chain; its full sequence is Pyridoxal kinase PdxY (286 aa).

Substrate-binding positions include Ser9 and 44 to 45; that span reads TQ. ATP contacts are provided by residues Asp111, Ala143, Glu148, Lys181, and 208-211; that span reads RPLV. Residue Asp222 participates in substrate binding.

It belongs to the pyridoxine kinase family. PdxY subfamily. Homodimer. Mg(2+) serves as cofactor.

The enzyme catalyses pyridoxal + ATP = pyridoxal 5'-phosphate + ADP + H(+). The protein operates within cofactor metabolism; pyridoxal 5'-phosphate salvage; pyridoxal 5'-phosphate from pyridoxal: step 1/1. In terms of biological role, pyridoxal kinase involved in the salvage pathway of pyridoxal 5'-phosphate (PLP). Catalyzes the phosphorylation of pyridoxal to PLP. In Pectobacterium atrosepticum (strain SCRI 1043 / ATCC BAA-672) (Erwinia carotovora subsp. atroseptica), this protein is Pyridoxal kinase PdxY.